The sequence spans 210 residues: Synaptosomal-associated protein 23 (210 aa).

Met1 carries the N-acetylmethionine modification. Phosphoserine occurs at positions 5, 20, 23, and 34. The t-SNARE coiled-coil homology 1 domain occupies 14–76 (HQVTDESLES…REAEKTLTEL (63 aa)). Positions 23-76 (STRRILGLAIESQDAGIKTITMLDEQGEQLNRIEEGMDQINKDMREAEKTLTEL) form a coiled coil. Residues Cys79, Cys80, Cys83, Cys85, and Cys87 are each lipidated (S-palmitoyl cysteine). Residues 104–136 (GDGGDSSPSNVVSKQPSRITNGQPQQTTGAASG) form a disordered region. Polar residues predominate over residues 109 to 133 (SSPSNVVSKQPSRITNGQPQQTTGA). Residues Ser110 and Ser160 each carry the phosphoserine modification. The t-SNARE coiled-coil homology 2 domain occupies 145 to 207 (DAREDEMEEN…DIANTRAKKL (63 aa)).

It belongs to the SNAP-25 family. As to quaternary structure, homotetramer (via coiled-coil domain), also forms heterotetramers with STX4 and VAMP3. Found in a complex with VAMP8 and STX1A. Found in a complex with VAMP8 and STX4 in pancreas. Interacts simultaneously with SNAPIN and SYN4. Interacts with STX1A. Interacts with STX12. Interacts tightly to multiple syntaxins and synaptobrevins/VAMPs. Interacts with ZDHHC13 (via ANK repeats). Interacts with ZDHHC17 (via ANK repeats).

The protein resides in the cell membrane. Its subcellular location is the synapse. It localises to the synaptosome. It is found in the cytoplasmic vesicle membrane. Its function is as follows. Essential component of the high affinity receptor for the general membrane fusion machinery and an important regulator of transport vesicle docking and fusion. This is Synaptosomal-associated protein 23 (Snap23) from Rattus norvegicus (Rat).